A 354-amino-acid polypeptide reads, in one-letter code: tRNA N6-adenosine threonylcarbamoyltransferase (354 aa).

Fe cation is bound by residues His111 and His115. Substrate is bound by residues 134–138 (LVSGG), Asp167, Gly180, and Asn279. Fe cation is bound at residue Asp319.

It belongs to the KAE1 / TsaD family. It depends on Fe(2+) as a cofactor.

It localises to the cytoplasm. It catalyses the reaction L-threonylcarbamoyladenylate + adenosine(37) in tRNA = N(6)-L-threonylcarbamoyladenosine(37) in tRNA + AMP + H(+). Its function is as follows. Required for the formation of a threonylcarbamoyl group on adenosine at position 37 (t(6)A37) in tRNAs that read codons beginning with adenine. Is involved in the transfer of the threonylcarbamoyl moiety of threonylcarbamoyl-AMP (TC-AMP) to the N6 group of A37, together with TsaE and TsaB. TsaD likely plays a direct catalytic role in this reaction. This chain is tRNA N6-adenosine threonylcarbamoyltransferase, found in Neisseria meningitidis serogroup B (strain ATCC BAA-335 / MC58).